Consider the following 119-residue polypeptide: MAETSGPTAAGGSTSSTVTTESETQPEHRSLTLKLRKRKPDKKVEWTCDTVDNENLGRRSSKCCCIYEKPRPFGESSSESEDDDDCCESAHCIRGHKKATSGSKETPSSHHDKTGSMQH.

The segment covering 1 to 23 (MAETSGPTAAGGSTSSTVTTESE) has biased composition (low complexity). The segment at 1-42 (MAETSGPTAAGGSTSSTVTTESETQPEHRSLTLKLRKRKPDK) is disordered. Atypical RING finger domain stretches follow at residues 55–65 (NLGRRSSKCCC) and 87–96 (CESAHCIRGH). The segment at 96–119 (HKKATSGSKETPSSHHDKTGSMQH) is disordered. Basic and acidic residues predominate over residues 107 to 119 (PSSHHDKTGSMQH).

It carries out the reaction S-ubiquitinyl-[E2 ubiquitin-conjugating enzyme]-L-cysteine + [acceptor protein]-L-lysine = [E2 ubiquitin-conjugating enzyme]-L-cysteine + N(6)-ubiquitinyl-[acceptor protein]-L-lysine.. It participates in protein modification; protein ubiquitination. Functionally, atypical E3 ubiquitin-protein ligase which ubiquitinates TLR2 at 'Lys-754' leading to its degradation by the proteasome. Inhibitor of protein phosphatase 1. The polypeptide is E3 ubiquitin-protein ligase PPP1R11 (ppp1r11) (Xenopus laevis (African clawed frog)).